A 445-amino-acid polypeptide reads, in one-letter code: Probable carboxypeptidase UREG_07869 (445 aa).

The first 17 residues, 1-17 (MKSLILTTLALLPLVSC), serve as a signal peptide directing secretion. Residue Asp165 participates in Zn(2+) binding. Residue Glu197 is the Proton acceptor of the active site. Residue Glu198 participates in Zn(2+) binding.

The protein belongs to the peptidase M20A family. Requires Zn(2+) as cofactor.

The protein resides in the secreted. This is Probable carboxypeptidase UREG_07869 from Uncinocarpus reesii (strain UAMH 1704).